A 148-amino-acid polypeptide reads, in one-letter code: Methylglyoxal synthase (148 aa).

Residues 4–148 (VSVPAIKRIV…LSYNTKVKKD (145 aa)) enclose the MGS-like domain. Substrate contacts are provided by residues His-17, Lys-21, 43–46 (TGTT), and 63–64 (SG). Asp-69 (proton donor/acceptor) is an active-site residue. A substrate-binding site is contributed by His-96.

Belongs to the methylglyoxal synthase family.

It catalyses the reaction dihydroxyacetone phosphate = methylglyoxal + phosphate. Catalyzes the formation of methylglyoxal from dihydroxyacetone phosphate. The protein is Methylglyoxal synthase of Leptospira interrogans serogroup Icterohaemorrhagiae serovar copenhageni (strain Fiocruz L1-130).